Reading from the N-terminus, the 115-residue chain is Secapin (115 aa).

Positions 1 to 24 are cleaved as a signal peptide; that stretch reads MRFQVYILHLCFFILVVLTYLSQG. A propeptide spanning residues 25 to 90 is cleaved from the precursor; that stretch reads QSYTTTTTTS…STENFDITNR (66 aa). A disulfide bond links Cys99 and Cys110.

Belongs to the secapin family. In terms of tissue distribution, expressed in the epidermis, fat body and venom gland.

It localises to the secreted. Functionally, serine protease inhibitor which exhibits antifibrinolytic, antielastolytic and antimicrobial activities. Displays antimicrobial activity against bacteria and fungi. Likely functions in the innate immune response to microbial infection and possibly in the venom, as an antifibrinolytic agent. The recombinant form inhibits trypsin (IC(50)=80.02 nM, Ki=127.25 nM), chymotrypsin (IC(50)=393.78 nM, Ki=432.59 nM), the microbial serine proteases subtilisin A (IC(50)=379.20 nM, Ki=492.77 nM) and proteinase K (IC(50)=189.43 nM, Ki=271.76 nM), plasmin (IC(50)=457.98 nM, Ki=502.91 nM), human elastase (IC(50)=347.81 nM, Ki=469.90 nM) and porcine elastase (IC(50)=94.70 nM, Ki=125.62 nM). Does not inhibit thrombin. Binds to human plasmin and inhibits the plasmin-mediated degradation of fibrin to fibrin degradation products, indicating its role as an anti-fibrinolytic agent. Also binds to bacterial and fungal surfaces. Exhibits antimicrobial activity against the Gram-positive bacteria B.thuringiensis (MIC=4.21 uM) and P.larvae (MIC=11.13 uM), the Gram-negative bacteria E.coli (MIC=6.50 uM) and the multidrug-resistant A.baumannii (MIC=5 ug/ml, MBC=10 ug/ml), as well as against the fungus B.bassiana (IC(50)=2.57 uM). The synthetic peptide also exhibits antimicrobial activity against the Gram-positive bacterium P.larvae (MIC=41.12 uM), the Gram-negative bacterium P.aeruginosa (MIC=65.75 uM), and the fungus B.bassiana (IC(50)=44.27 uM). Is also able to prevent A.baumannii biofilm formation and eliminate established A.baumannii biofilms. In vitro, does not induce an inflammatory response and has no cytotoxic activity against mammalian cells. The protein is Secapin of Apis cerana (Indian honeybee).